The primary structure comprises 161 residues: Nucleotide-binding protein HCH_04620 (161 aa).

It belongs to the YajQ family.

Its function is as follows. Nucleotide-binding protein. This is Nucleotide-binding protein HCH_04620 from Hahella chejuensis (strain KCTC 2396).